The following is a 1514-amino-acid chain: MTTSRKSHAKDKKAGGEQDLADLKFRYDLLTNELFHLREFVSLVDYDPTHFNDSESFQKFLRETHLSLEERGEKFTDDVAKKGTNGDLTRRRRNLRTSTVVSSETTNEKKGDIELKLESIAPLVRNKCEELKYKLSDHSNRKSIVPQKRPIQHLKKREAAKSLKFKSERKENPLPLHEHIAEERYDHIAKVEEPSEAFTIKCPSDDSSFENTSEHYSDNFYFTTSSEEEDIKKKRGRKKKKPRIKLVVHPPKQTITNPLHVVKPGYESLHEYIASFKSLEDDLTLEEYNKYIDEQRRLLSRLKKGIENGALKYDKETDSLQPITSKEIKTIITYKPDPISYFYKQQDLQIHTDHLINQGIHMSKLFRSSTKARIARAKKVSQMIEQHFKHVAGAEERKAKEEERHKKSLARFAVQAVKKRWNMAEKAYRILRKDEEEQLKRIEGKQHLSKMLEKSTQLLEAQLNQVNDDGRSSTPSSDSNDVLSESDDDMDDELSTSSDEDEEVDADVGLENSPASTEATPTDESLNLIQLKEKYGHFNGSSTVYDSRNKDEKFPTLDKHESSSSESSVMTGEESSIYSSSENESQNENDRESDDKTPSVGLSALFGKGEESDGDLDLDDSEDFTVNSSSVEGEELEKDQVDNSAATFERAGDFVHTQNENRDDIKDVEEDAETKVQEEQLSVVDVPVPSLLRGNLRTYQKQGLNWLASLYNNHTNGILADEMGLGKTIQTISLLAYLACEKENWGPHLIVVPTSVLLNWEMEFKRFAPGFKVLTYYGSPQQRKEKRKGWNKPDAFHVCIVSYQLVVQDQHSFKRKRWQYMVLDEAHNIKNFRSTRWQALLNFNTQRRLLLTGTPLQNNLAELWSLLYFLMPQTVIDGKKVSGFADLDAFQQWFGRPVDKIIETGQNFGQDKETKKTVAKLHQVLRPYLLRRLKADVEKQMPAKYEHIVYCKLSKRQRFLYDDFMSRAQTKATLASGNFMSIVNCLMQLRKVCNHPNLFEVRPILTSFVLEHCVASDYKDVERTLLKLFKKNNQVNRVDLDFLNLVFTLNDKDLTSYHAEEISKLTCVKNFVEEVNKLRETNKQLQEEFGEASFLNFQDANQYFKYSNKQKLEGTVDMLNFLKMVNKLRCDRRPIFGKNLIDLLTKDRRVKYDKSSIIDNELIKPLQTRVLDNRKIIDTFAVLTPSAVSLDMRKLALGLNDDSSVGENTRLKVMQNCFEVSNPLHQLQTKLTIAFPDKSLLQYDCGKLQKLAILLQQLKDNGHRALIFTQMTKVLDVLEQFLNYHGYLYMRLDGATKIEDRQILTERFNTDSRITVFILSSRSGGLGINLTGADTVIFYDSDWNPAMDKQCQDRCHRIGQTRDVHIYRFVSEHTIESNILKKANQKRQLDNVVIQEGDFTTDYFSKLSVRDLLGSELPENASGGDKPLIADADVAAKDPRQLERLLAQAEDEDDVKAANLAMREVEIDNDDFDESTEKKAANEEEENHAELDEYEGTAHVDEYMIRFIANGYYY.

The HSA domain maps to 339 to 411 (ISYFYKQQDL…EERHKKSLAR (73 aa)). Residues 465-480 (QVNDDGRSSTPSSDSN) are compositionally biased toward polar residues. Disordered regions lie at residues 465-524 (QVND…PTDE) and 538-641 (FNGS…KDQV). The span at 484 to 508 (SESDDDMDDELSTSSDEDEEVDADV) shows a compositional bias: acidic residues. Polar residues predominate over residues 513–524 (SPASTEATPTDE). Residues 547–563 (SRNKDEKFPTLDKHESS) show a composition bias toward basic and acidic residues. Positions 564–586 (SSESSVMTGEESSIYSSSENESQ) are enriched in low complexity. Residues 588 to 597 (ENDRESDDKT) are compositionally biased toward basic and acidic residues. Over residues 612-623 (SDGDLDLDDSED) the composition is skewed to acidic residues. The Helicase ATP-binding domain occupies 708–873 (ASLYNNHTNG…WSLLYFLMPQ (166 aa)). 721 to 728 (DEMGLGKT) is a binding site for ATP. Residues 824–827 (DEAH) carry the DEAH box motif. Residues 1247 to 1400 (KLQKLAILLQ…NVVIQEGDFT (154 aa)) form the Helicase C-terminal domain. The segment at 1469–1490 (NDDFDESTEKKAANEEEENHAE) is disordered. Over residues 1475 to 1490 (STEKKAANEEEENHAE) the composition is skewed to basic and acidic residues.

It belongs to the SNF2/RAD54 helicase family. SWR1 subfamily. In terms of assembly, component of the SWR1 chromatin-remodeling complex composed of at least ACT1, ARP4, RVB1, RVB2, ARP6, YAF9, VPS71, VPS72, SWC3, SWC4, SWC5, SWC7 and SWR1, and perhaps BDF1.

The protein localises to the nucleus. The enzyme catalyses ATP + H2O = ADP + phosphate + H(+). Functionally, catalytic component of the SWR1 complex which mediates the ATP-dependent exchange of histone H2A for the H2A variant HZT1 leading to transcriptional regulation of selected genes by chromatin remodeling. The sequence is that of Helicase SWR1 (SWR1) from Saccharomyces cerevisiae (strain ATCC 204508 / S288c) (Baker's yeast).